The primary structure comprises 451 residues: Tubulin beta-1 chain (451 aa).

The MREI motif motif lies at 1-4 (MREI). Q11, E69, S138, G142, T143, and G144 together coordinate GTP. E69 is a Mg(2+) binding site. S172 carries the phosphoserine; by CDK1 modification. Residues N204 and N226 each contribute to the GTP site. The segment at 430 to 451 (AGLEDSEEDVEEAEVEAEDKDH) is disordered. Over residues 433–451 (EDSEEDVEEAEVEAEDKDH) the composition is skewed to acidic residues. S435 is subject to Phosphoserine. A 5-glutamyl polyglutamate modification is found at E440.

This sequence belongs to the tubulin family. Dimer of alpha and beta chains. A typical microtubule is a hollow water-filled tube with an outer diameter of 25 nm and an inner diameter of 15 nM. Alpha-beta heterodimers associate head-to-tail to form protofilaments running lengthwise along the microtubule wall with the beta-tubulin subunit facing the microtubule plus end conferring a structural polarity. Microtubules usually have 13 protofilaments but different protofilament numbers can be found in some organisms and specialized cells. Interacts with RANBP10. Requires Mg(2+) as cofactor. Some glutamate residues at the C-terminus are polyglycylated, resulting in polyglycine chains on the gamma-carboxyl group. Glycylation is mainly limited to tubulin incorporated into axonemes (cilia and flagella) whereas glutamylation is prevalent in neuronal cells, centrioles, axonemes, and the mitotic spindle. Both modifications can coexist on the same protein on adjacent residues, and lowering polyglycylation levels increases polyglutamylation, and reciprocally. Cilia and flagella glycylation is required for their stability and maintenance. Flagella glycylation controls sperm motility. Post-translationally, some glutamate residues at the C-terminus are polyglutamylated, resulting in polyglutamate chains on the gamma-carboxyl group. Polyglutamylation plays a key role in microtubule severing by spastin (SPAST). SPAST preferentially recognizes and acts on microtubules decorated with short polyglutamate tails: severing activity by SPAST increases as the number of glutamates per tubulin rises from one to eight, but decreases beyond this glutamylation threshold. Glutamylation is also involved in cilia motility. In terms of processing, phosphorylated on Ser-172 by CDK1 during the cell cycle, from metaphase to telophase, but not in interphase. This phosphorylation inhibits tubulin incorporation into microtubules.

The protein resides in the cytoplasm. It localises to the cytoskeleton. Its function is as follows. Tubulin is the major constituent of microtubules, a cylinder consisting of laterally associated linear protofilaments composed of alpha- and beta-tubulin heterodimers. Microtubules grow by the addition of GTP-tubulin dimers to the microtubule end, where a stabilizing cap forms. Below the cap, tubulin dimers are in GDP-bound state, owing to GTPase activity of alpha-tubulin. This Mus musculus (Mouse) protein is Tubulin beta-1 chain (Tubb1).